The chain runs to 259 residues: Protein GrpE (259 aa).

Disordered stretches follow at residues 1–74 (MNSD…IKGS) and 228–259 (PGPK…KDEN). The segment covering 17–40 (SSQNNPSENSVSSPNSNESVNQVE) has biased composition (low complexity). Composition is skewed to polar residues over residues 56-73 (VDTA…NIKG) and 240-253 (QSAS…SVDG).

It belongs to the GrpE family. In terms of assembly, homodimer.

Its subcellular location is the cytoplasm. In terms of biological role, participates actively in the response to hyperosmotic and heat shock by preventing the aggregation of stress-denatured proteins, in association with DnaK and GrpE. It is the nucleotide exchange factor for DnaK and may function as a thermosensor. Unfolded proteins bind initially to DnaJ; upon interaction with the DnaJ-bound protein, DnaK hydrolyzes its bound ATP, resulting in the formation of a stable complex. GrpE releases ADP from DnaK; ATP binding to DnaK triggers the release of the substrate protein, thus completing the reaction cycle. Several rounds of ATP-dependent interactions between DnaJ, DnaK and GrpE are required for fully efficient folding. The chain is Protein GrpE from Prochlorococcus marinus (strain NATL2A).